Reading from the N-terminus, the 1449-residue chain is MGARASVLTGGKLDQWEAIYLRPGGKKKYRLKHLVWASRELERFACNPGLMDTANGCAQLINQLEPALKTGSEGLRSLXNTLAVLYCVHSNIPVHNTQEALDKIKEKQEQHKSEPKKPEAGTAAAADSSISRNYPLVQNAQGQMVHQPLTPRTLNAWVKVIEEKAFNPEIIPMFMALSEGATPSDLNSMLNTVGGHQAAMQMLKEVINEEAAEWDRTHPAPVGPLPPGQMRDPRGSDIAGTTSTLAEQVAWMTSNPPIPVGDIYRRWIVLGLNRIVRMYSPVSILEIKQGPKEPFRDYVDRFYKTLRAEQATQDVKNWMTETLLVQNANPDCKQILKALGPGATLEEMMTACQGVGGPAHKARVLAEAMAQAQTATSVFVQRGNFKGIRKTIKCFNCGKEGHLARNCKAPRRRGCWKCGQEGHQMKDCKNEGXQANFRKGLVSLQRETRKLPPDNNKERAHSPATRELWVSGGEEHTGKGDAGEPGEDRDLSVPTLNFPQITLWQRPVXAVKIGKEIREALLDTGADDTVIEEIQLEGKWKPKMIGGIGGFIKVRQYDNITIDIQGRKAVGTVLVGPTPVNIIGRNFLTQIGCTLNFPISPIETVPVKLKPGMDGPRVKQWPLTAEKIEALREICTEMEKEGKISRIGPENPYNTPIFAIKKKDSTKWRKLVDFRELNKRTQEFWEVQLGIPHPAGLKQKKSVTVXDVGDAYFSCPLDKDFRKYTAFTIPSINNETPGIRYQYNVLPQGWKGSPAIFQSSMTKILEPFRKKHPEIIIYQYMDDLYVGSDLEIAQHRETVEELRGHLLKWGFTTPDKKHQKEPPFLWMGYELHPDKWTVQPIKLPEKEVWTVNDIQKLVGKLNWASQIYPGIKVKQLCKLIRGTKALTEVVTFTQEAELELAENREILKEPLHGVYYDPGKELIAEIQKQGQGQWTYQIYQEPYKNLKTGKYAKXRSAHTNDIKELAAVVQKVATESIVIWGKTPKFKLPVQKEVWETWWTEHWQATWIPEWEFVNTPPLVKLWYQLETEPISGAETYYVDGAANKETKLGKAGFVTDRGRQKVVSIENTTNQKAELQAILLALQESGQEANIVTDSQYAMGIIHSQPDKSESDLVGQIIEELIKKERVYLSWVPAHKGIGGNEQVDXLVSSGIRXVLFLDGIEKAQEEHERYHSNWKAMASDFNLPPIVAKEIVASCDKCQLKGEAMHGQINCSPGVWQLDCTHLEGKIILVAVHVASGYLEAEVIPAETGQETAYFILKLAGRWPVKVIHTDNGPNFISATVKAACWWAGIKQEFGIPYNPQSQGAVESMNKELKKIIGQIRDQAEHLKTAVQMAVFIHNFKRKGGIGGXTAGERIIDIIATDIQTTKLQTQILKVQNFXVYYRDSRDPIWKGPAKLLWKGEGAVVIQDNGDIKVVPRRKAKIIRDYGKQMAGDGCVASGQDENQDME.

Gly-2 is lipidated: N-myristoyl glycine; by host. Residues 7-31 are interaction with Gp41; that stretch reads VLTGGKLDQWEAIYLRPGGKKKYRL. The tract at residues 8-43 is interaction with host CALM1; that stretch reads LTGGKLDQWEAIYLRPGGKKKYRLKHLVWASRELER. Positions 12-19 are interaction with host AP3D1; it reads KLDQWEAI. The segment at 14–33 is interaction with membrane phosphatidylinositol 4,5-bisphosphate and RNA; the sequence is DQWEAIYLRPGGKKKYRLKH. The Nuclear export signal signature appears at 16 to 22; that stretch reads WEAIYLR. Residues 26 to 32 carry the Nuclear localization signal motif; it reads KKKYRLK. The interaction with membrane phosphatidylinositol 4,5-bisphosphate stretch occupies residues 73–77; it reads EGLRS. Basic and acidic residues predominate over residues 105-119; sequence KEKQEQHKSEPKKPE. Residues 105 to 128 are disordered; that stretch reads KEKQEQHKSEPKKPEAGTAAAADS. Tyr-134 is subject to Phosphotyrosine; by host. Residues 191 to 229 form an interaction with human PPIA/CYPA and NUP153 region; that stretch reads NTVGGHQAAMQMLKEVINEEAAEWDRTHPAPVGPLPPGQ. A dimerization/Multimerization of capsid protein p24 region spans residues 279–365; that stretch reads YSPVSILEIK…GGPAHKARVL (87 aa). CCHC-type zinc fingers lie at residues 392–409 and 413–430; these read IKCF…NCKA and RGCW…DCKN. Positions 445–492 are disordered; that stretch reads QRETRKLPPDNNKERAHSPATRELWVSGGEEHTGKGDAGEPGEDRDLS. Basic and acidic residues-rich tracts occupy residues 446 to 461 and 473 to 491; these read RETR…ERAH and GEEH…DRDL. The interval 499 to 503 is dimerization of protease; the sequence is PQITL. The Peptidase A2 domain occupies 518-587; that stretch reads REALLDTGAD…TPVNIIGRNF (70 aa). Residue Asp-523 is the For protease activity; shared with dimeric partner of the active site. 2 dimerization of protease regions span residues 547-553 and 586-598; these read GIGGFIK and NFLT…LNFP. The region spanning 641–831 is the Reverse transcriptase domain; it reads EGKISRIGPE…PPFLWMGYEL (191 aa). 3 residues coordinate Mg(2+): Asp-707, Asp-782, and Asp-783. The RT 'primer grip' stretch occupies residues 824–832; that stretch reads FLWMGYELH. The Tryptophan repeat motif motif lies at 995-1011; that stretch reads WETWWTEHWQATWIPEW. Positions 1031–1154 constitute an RNase H type-1 domain; it reads ISGAETYYVD…VDXLVSSGIR (124 aa). 4 residues coordinate Mg(2+): Asp-1040, Glu-1075, Asp-1095, and Asp-1146. Residues 1160 to 1201 form an Integrase-type zinc finger; sequence DGIEKAQEEHERYHSNWKAMASDFNLPPIVAKEIVASCDKCQ. Residues His-1169, His-1173, Cys-1197, and Cys-1200 each coordinate Zn(2+). The Integrase catalytic domain occupies 1211–1361; the sequence is INCSPGVWQL…TAGERIIDII (151 aa). 3 residues coordinate Mg(2+): Asp-1221, Asp-1273, and Glu-1309. The segment at residues 1380–1427 is a DNA-binding region (integrase-type); it reads FXVYYRDSRDPIWKGPAKLLWKGEGAVVIQDNGDIKVVPRRKAKIIRD.

As to quaternary structure, homotrimer; further assembles as hexamers of trimers. Interacts with gp41 (via C-terminus). Interacts with host CALM1; this interaction induces a conformational change in the Matrix protein, triggering exposure of the myristate group. Interacts with host AP3D1; this interaction allows the polyprotein trafficking to multivesicular bodies during virus assembly. Part of the pre-integration complex (PIC) which is composed of viral genome, matrix protein, Vpr and integrase. Homodimer; the homodimer further multimerizes as homohexamers or homopentamers. Interacts with human PPIA/CYPA; This interaction stabilizes the capsid. Interacts with human NUP153. Interacts with host PDZD8; this interaction stabilizes the capsid. Interacts with monkey TRIM5; this interaction destabilizes the capsid. In terms of assembly, homodimer, whose active site consists of two apposed aspartic acid residues. As to quaternary structure, heterodimer of p66 RT and p51 RT (RT p66/p51). Heterodimerization of RT is essential for DNA polymerase activity. The overall folding of the subdomains is similar in p66 RT and p51 RT but the spatial arrangements of the subdomains are dramatically different. Homotetramer; may further associate as a homohexadecamer. Part of the pre-integration complex (PIC) which is composed of viral genome, matrix protein, Vpr and integrase. Interacts with human SMARCB1/INI1 and human PSIP1/LEDGF isoform 1. Interacts with human KPNA3; this interaction might play a role in nuclear import of the pre-integration complex. Interacts with human NUP153; this interaction might play a role in nuclear import of the pre-integration complex. The cofactor is Mg(2+). Specific enzymatic cleavages by the viral protease yield mature proteins. The protease is released by autocatalytic cleavage. The polyprotein is cleaved during and after budding, this process is termed maturation. Proteolytic cleavage of p66 RT removes the RNase H domain to yield the p51 RT subunit. Nucleocapsid protein p7 might be further cleaved after virus entry. Post-translationally, tyrosine phosphorylated presumably in the virion by a host kinase. Phosphorylation is apparently not a major regulator of membrane association. In terms of processing, phosphorylated possibly by host MAPK1; this phosphorylation is necessary for Pin1-mediated virion uncoating. Methylated by host PRMT6, impairing its function by reducing RNA annealing and the initiation of reverse transcription.

Its subcellular location is the host cell membrane. It is found in the host endosome. The protein localises to the host multivesicular body. It localises to the virion membrane. The protein resides in the host nucleus. Its subcellular location is the host cytoplasm. It is found in the virion. The enzyme catalyses Specific for a P1 residue that is hydrophobic, and P1' variable, but often Pro.. It carries out the reaction Endohydrolysis of RNA in RNA/DNA hybrids. Three different cleavage modes: 1. sequence-specific internal cleavage of RNA. Human immunodeficiency virus type 1 and Moloney murine leukemia virus enzymes prefer to cleave the RNA strand one nucleotide away from the RNA-DNA junction. 2. RNA 5'-end directed cleavage 13-19 nucleotides from the RNA end. 3. DNA 3'-end directed cleavage 15-20 nucleotides away from the primer terminus.. It catalyses the reaction 3'-end directed exonucleolytic cleavage of viral RNA-DNA hybrid.. The catalysed reaction is DNA(n) + a 2'-deoxyribonucleoside 5'-triphosphate = DNA(n+1) + diphosphate. Its activity is regulated as follows. Protease: The viral protease is inhibited by many synthetic protease inhibitors (PIs), such as amprenavir, atazanavir, indinavir, loprinavir, nelfinavir, ritonavir and saquinavir. Use of protease inhibitors in tritherapy regimens permit more ambitious therapeutic strategies. Reverse transcriptase/ribonuclease H: RT can be inhibited either by nucleoside RT inhibitors (NRTIs) or by non nucleoside RT inhibitors (NNRTIs). NRTIs act as chain terminators, whereas NNRTIs inhibit DNA polymerization by binding a small hydrophobic pocket near the RT active site and inducing an allosteric change in this region. Classical NRTIs are abacavir, adefovir (PMEA), didanosine (ddI), lamivudine (3TC), stavudine (d4T), tenofovir (PMPA), zalcitabine (ddC), and zidovudine (AZT). Classical NNRTIs are atevirdine (BHAP U-87201E), delavirdine, efavirenz (DMP-266), emivirine (I-EBU), and nevirapine (BI-RG-587). The tritherapies used as a basic effective treatment of AIDS associate two NRTIs and one NNRTI. Mediates, with Gag polyprotein, the essential events in virion assembly, including binding the plasma membrane, making the protein-protein interactions necessary to create spherical particles, recruiting the viral Env proteins, and packaging the genomic RNA via direct interactions with the RNA packaging sequence (Psi). Gag-Pol polyprotein may regulate its own translation, by the binding genomic RNA in the 5'-UTR. At low concentration, the polyprotein would promote translation, whereas at high concentration, the polyprotein would encapsidate genomic RNA and then shut off translation. Functionally, targets the polyprotein to the plasma membrane via a multipartite membrane-binding signal, that includes its myristoylated N-terminus. Matrix protein is part of the pre-integration complex. Implicated in the release from host cell mediated by Vpu. Binds to RNA. Its function is as follows. Forms the conical core that encapsulates the genomic RNA-nucleocapsid complex in the virion. Most core are conical, with only 7% tubular. The core is constituted by capsid protein hexamer subunits. The core is disassembled soon after virion entry. Host restriction factors such as TRIM5-alpha or TRIMCyp bind retroviral capsids and cause premature capsid disassembly, leading to blocks in reverse transcription. Capsid restriction by TRIM5 is one of the factors which restricts HIV-1 to the human species. Host PIN1 apparently facilitates the virion uncoating. On the other hand, interactions with PDZD8 or CYPA stabilize the capsid. In terms of biological role, encapsulates and protects viral dimeric unspliced genomic RNA (gRNA). Binds these RNAs through its zinc fingers. Acts as a nucleic acid chaperone which is involved in rearangement of nucleic acid secondary structure during gRNA retrotranscription. Also facilitates template switch leading to recombination. As part of the polyprotein, participates in gRNA dimerization, packaging, tRNA incorporation and virion assembly. Aspartyl protease that mediates proteolytic cleavages of Gag and Gag-Pol polyproteins during or shortly after the release of the virion from the plasma membrane. Cleavages take place as an ordered, step-wise cascade to yield mature proteins. This process is called maturation. Displays maximal activity during the budding process just prior to particle release from the cell. Also cleaves Nef and Vif, probably concomitantly with viral structural proteins on maturation of virus particles. Hydrolyzes host EIF4GI and PABP1 in order to shut off the capped cellular mRNA translation. The resulting inhibition of cellular protein synthesis serves to ensure maximal viral gene expression and to evade host immune response. Also mediates cleavage of host YTHDF3. Mediates cleavage of host CARD8, thereby activating the CARD8 inflammasome, leading to the clearance of latent HIV-1 in patient CD4(+) T-cells after viral reactivation; in contrast, HIV-1 can evade CARD8-sensing when its protease remains inactive in infected cells prior to viral budding. Functionally, multifunctional enzyme that converts the viral RNA genome into dsDNA in the cytoplasm, shortly after virus entry into the cell. This enzyme displays a DNA polymerase activity that can copy either DNA or RNA templates, and a ribonuclease H (RNase H) activity that cleaves the RNA strand of RNA-DNA heteroduplexes in a partially processive 3' to 5' endonucleasic mode. Conversion of viral genomic RNA into dsDNA requires many steps. A tRNA(3)-Lys binds to the primer-binding site (PBS) situated at the 5'-end of the viral RNA. RT uses the 3' end of the tRNA primer to perform a short round of RNA-dependent minus-strand DNA synthesis. The reading proceeds through the U5 region and ends after the repeated (R) region which is present at both ends of viral RNA. The portion of the RNA-DNA heteroduplex is digested by the RNase H, resulting in a ssDNA product attached to the tRNA primer. This ssDNA/tRNA hybridizes with the identical R region situated at the 3' end of viral RNA. This template exchange, known as minus-strand DNA strong stop transfer, can be either intra- or intermolecular. RT uses the 3' end of this newly synthesized short ssDNA to perform the RNA-dependent minus-strand DNA synthesis of the whole template. RNase H digests the RNA template except for two polypurine tracts (PPTs) situated at the 5'-end and near the center of the genome. It is not clear if both polymerase and RNase H activities are simultaneous. RNase H probably can proceed both in a polymerase-dependent (RNA cut into small fragments by the same RT performing DNA synthesis) and a polymerase-independent mode (cleavage of remaining RNA fragments by free RTs). Secondly, RT performs DNA-directed plus-strand DNA synthesis using the PPTs that have not been removed by RNase H as primers. PPTs and tRNA primers are then removed by RNase H. The 3' and 5' ssDNA PBS regions hybridize to form a circular dsDNA intermediate. Strand displacement synthesis by RT to the PBS and PPT ends produces a blunt ended, linear dsDNA copy of the viral genome that includes long terminal repeats (LTRs) at both ends. Its function is as follows. Catalyzes viral DNA integration into the host chromosome, by performing a series of DNA cutting and joining reactions. This enzyme activity takes place after virion entry into a cell and reverse transcription of the RNA genome in dsDNA. The first step in the integration process is 3' processing. This step requires a complex comprising the viral genome, matrix protein, Vpr and integrase. This complex is called the pre-integration complex (PIC). The integrase protein removes 2 nucleotides from each 3' end of the viral DNA, leaving recessed CA OH's at the 3' ends. In the second step, the PIC enters cell nucleus. This process is mediated through integrase and Vpr proteins, and allows the virus to infect a non dividing cell. This ability to enter the nucleus is specific of lentiviruses, other retroviruses cannot and rely on cell division to access cell chromosomes. In the third step, termed strand transfer, the integrase protein joins the previously processed 3' ends to the 5' ends of strands of target cellular DNA at the site of integration. The 5'-ends are produced by integrase-catalyzed staggered cuts, 5 bp apart. A Y-shaped, gapped, recombination intermediate results, with the 5'-ends of the viral DNA strands and the 3' ends of target DNA strands remaining unjoined, flanking a gap of 5 bp. The last step is viral DNA integration into host chromosome. This involves host DNA repair synthesis in which the 5 bp gaps between the unjoined strands are filled in and then ligated. Since this process occurs at both cuts flanking the HIV genome, a 5 bp duplication of host DNA is produced at the ends of HIV-1 integration. Alternatively, Integrase may catalyze the excision of viral DNA just after strand transfer, this is termed disintegration. The polypeptide is Gag-Pol polyprotein (gag-pol) (Human immunodeficiency virus type 1 group N (isolate YBF106) (HIV-1)).